Reading from the N-terminus, the 245-residue chain is Dehydrogenase/reductase SDR family member 6 (245 aa).

NAD(+) contacts are provided by residues 16 to 18 (QGI), Asp37, and Asp58. Position 144 (Arg144) interacts with substrate. Catalysis depends on Tyr147, which acts as the Proton acceptor. NAD(+)-binding positions include Lys151 and 180-184 (VDTPS). Arg188 and Arg205 together coordinate substrate.

This sequence belongs to the short-chain dehydrogenases/reductases (SDR) family. Homotetramer.

It localises to the cytoplasm. It catalyses the reaction cis-4-hydroxy-L-proline + NAD(+) = 4-oxo-L-proline + NADH + H(+). It carries out the reaction (R)-3-hydroxybutanoate + NAD(+) = acetoacetate + NADH + H(+). The protein operates within amino-acid metabolism. Its pathway is siderophore biosynthesis. Its function is as follows. NAD(H)-dependent dehydrogenase/reductase with a preference for cyclic substrates. Catalyzes stereoselective conversion of 4-oxo-L-proline to cis-4-hydroxy-L-proline, likely a detoxification mechanism for ketoprolines. Mediates the formation of 2,5-dihydroxybenzoate (2,5-DHBA), a siderophore that chelates free cytoplasmic iron, thereby regulating iron transport and homeostasis while protecting cells against free radical-induced oxidative stress. The iron-siderophore complex is imported into mitochondria, providing an iron source for mitochondrial metabolic processes in particular heme synthesis. May act as a 3-hydroxybutyrate dehydrogenase. This is Dehydrogenase/reductase SDR family member 6 (bdh2) from Aquarana catesbeiana (American bullfrog).